The chain runs to 358 residues: Heme A synthase (358 aa).

Transmembrane regions (helical) follow at residues 22–42 (IQVW…VGGA), 107–127 (VLGR…WAIK), 133–153 (VLLQ…VGWW), 172–192 (LAFH…LSQG), 208–228 (FAGW…LVAG), 269–289 (FVHR…AFYV), 302–322 (AFFI…TLLQ), and 324–344 (VPIS…CFSV). His271 lines the heme pocket. His332 is a binding site for heme.

Belongs to the COX15/CtaA family. Type 2 subfamily. Interacts with CtaB. It depends on heme b as a cofactor.

Its subcellular location is the cell membrane. The enzyme catalyses Fe(II)-heme o + 2 A + H2O = Fe(II)-heme a + 2 AH2. Its pathway is porphyrin-containing compound metabolism; heme A biosynthesis; heme A from heme O: step 1/1. In terms of biological role, catalyzes the conversion of heme O to heme A by two successive hydroxylations of the methyl group at C8. The first hydroxylation forms heme I, the second hydroxylation results in an unstable dihydroxymethyl group, which spontaneously dehydrates, resulting in the formyl group of heme A. The sequence is that of Heme A synthase from Bartonella henselae (strain ATCC 49882 / DSM 28221 / CCUG 30454 / Houston 1) (Rochalimaea henselae).